The following is a 57-amino-acid chain: Small ribosomal subunit protein bS21 (57 aa).

The interval 34 to 57 is disordered; sequence RKEHYIKPSVQKKNRQKNMRSKKR. Basic residues predominate over residues 43 to 57; it reads VQKKNRQKNMRSKKR.

Belongs to the bacterial ribosomal protein bS21 family.

The polypeptide is Small ribosomal subunit protein bS21 (Aster yellows witches'-broom phytoplasma (strain AYWB)).